A 230-amino-acid chain; its full sequence is Androgen-dependent TFPI-regulating protein (230 aa).

The Cytoplasmic segment spans residues 1–3; it reads MTK. The helical transmembrane segment at 4–24 threads the bilayer; the sequence is TSTCIYHFLVLSWYTFLNYYI. Residues 25–46 lie on the Extracellular side of the membrane; that stretch reads SQEGKDEVKPKILANGARWKYM. A helical transmembrane segment spans residues 47 to 67; the sequence is TLLNLLLQTIFYGVTCLDDVL. The Cytoplasmic portion of the chain corresponds to 68–85; the sequence is KRTKGGKDIKFLTAFRDL. A helical transmembrane segment spans residues 86–106; sequence LFTTLAFPVSTFVFLAFWILF. Residues 107–119 are Extracellular-facing; sequence LYNRDLIYPKVLD. A helical membrane pass occupies residues 120 to 140; it reads TVIPVWLNHAMHTFIFPITLA. The Cytoplasmic segment spans residues 141-154; sequence EVVLRPHSYPSKKT. The helical transmembrane segment at 155-175 threads the bilayer; it reads GLTLLAAASIAYISRILWLYF. The Extracellular segment spans residues 176-189; sequence ETGTWVYPVFAKLS. The chain crosses the membrane as a helical span at residues 190 to 210; sequence LLGLAAFFSLSYVFIASIYLL. Residues 211 to 230 are Cytoplasmic-facing; it reads GEKLNHWKWGDMRQPRKKRK.

Belongs to the AIG1 family. Expressed in cultured endothelial cells and in placenta.

It is found in the cell membrane. It catalyses the reaction 9-hexadecanoyloxy-octadecanoate + H2O = 9-hydroxy-octadecanoate + hexadecanoate + H(+). The enzyme catalyses 12-hexadecanoyloxy-octadecanoate + H2O = 12-hydroxyoctadecanoate + hexadecanoate + H(+). The catalysed reaction is 9-(9Z-hexadecenoyloxy)-octadecanoate + H2O = (9Z)-hexadecenoate + 9-hydroxy-octadecanoate + H(+). It carries out the reaction 12-(9Z-hexadecenoyloxy)-octadecanoate + H2O = 12-hydroxyoctadecanoate + (9Z)-hexadecenoate + H(+). It catalyses the reaction 13-(9Z-hexadecenoyloxy)-octadecanoate + H2O = 13-hydroxy-octadecanoate + (9Z)-hexadecenoate + H(+). The enzyme catalyses 9-octadecanoyloxy-octadecanoate + H2O = 9-hydroxy-octadecanoate + octadecanoate + H(+). The catalysed reaction is 12-octadecanoyloxy-octadecanoate + H2O = 12-hydroxyoctadecanoate + octadecanoate + H(+). It carries out the reaction 13-octadecanoyloxy-octadecanoate + H2O = 13-hydroxy-octadecanoate + octadecanoate + H(+). It catalyses the reaction 9-(9Z-octadecenoyloxy)-octadecanoate + H2O = 9-hydroxy-octadecanoate + (9Z)-octadecenoate + H(+). The enzyme catalyses 12-(9Z-octadecenoyloxy)-octadecanoate + H2O = 12-hydroxyoctadecanoate + (9Z)-octadecenoate + H(+). The catalysed reaction is 13-(9Z-octadecenoyloxy)-octadecanoate + H2O = 13-hydroxy-octadecanoate + (9Z)-octadecenoate + H(+). It carries out the reaction 5-(9Z-octadecenoyloxy)-octadecanoate + H2O = 5-hydroxy-octadecanoate + (9Z)-octadecenoate + H(+). With respect to regulation, inhibited by N-hydroxyhydantoin carbamate JJH260 and beta-lactone KC01. Hydrolyzes bioactive fatty-acid esters of hydroxy-fatty acids (FAHFAs), but not other major classes of lipids. Show a preference for FAHFAs with branching distal from the carboxylate head group of the lipids. Regulates the expression and the cell-associated anticoagulant activity of the inhibitor TFPI in endothelial cells (in vitro). The sequence is that of Androgen-dependent TFPI-regulating protein (ADTRP) from Homo sapiens (Human).